Consider the following 185-residue polypeptide: Probable host range protein 2 (185 aa).

It belongs to the poxviridae C7 protein family.

Functionally, plays a role for multiplication of the virus in different cell types. This is Probable host range protein 2 from Swinepox virus (strain Kasza) (SWPV).